A 253-amino-acid chain; its full sequence is DNA repair protein RecO (253 aa).

It belongs to the RecO family.

Involved in DNA repair and RecF pathway recombination. This chain is DNA repair protein RecO, found in Nitrobacter hamburgensis (strain DSM 10229 / NCIMB 13809 / X14).